A 201-amino-acid chain; its full sequence is Cytochrome c oxidase assembly protein CtaG (201 aa).

The Cytoplasmic segment spans residues 1–13; the sequence is MTDQGENEKKQRR. A helical; Signal-anchor for type II membrane protein membrane pass occupies residues 14-36; sequence SNATIAVACLSFFVCMIGAAYAS. The Periplasmic portion of the chain corresponds to 37–201; that stretch reads VPLYRIFCQV…KAVGSTRNGG (165 aa).

This sequence belongs to the COX11/CtaG family.

The protein resides in the cell inner membrane. In terms of biological role, exerts its effect at some terminal stage of cytochrome c oxidase synthesis, probably by being involved in the insertion of the copper B into subunit I. The protein is Cytochrome c oxidase assembly protein CtaG of Brucella suis (strain ATCC 23445 / NCTC 10510).